The chain runs to 2766 residues: PDZ domain-containing protein 2 (2766 aa).

One can recognise a PDZ 1 domain in the interval 85-177 (LSFGNIPVFG…GGFIYLIMLR (93 aa)). 2 disordered regions span residues 189–315 (GNSG…KTGK) and 419–452 (MPGSEESQDVGSSEESKGNLESPKQGNCKTKLKS). Acidic residues predominate over residues 242 to 254 (TADDPNSELENGA). Residues 280–296 (HLERSEADSEVELRVPK) show a composition bias toward basic and acidic residues. One can recognise a PDZ 2 domain in the interval 334-419 (KMELLKESDG…MVQLVVASKM (86 aa)). Serine 517 bears the Phosphoserine mark. A PDZ 3 domain is found at 535-621 (IIGLYKEKGK…GLFVLTVRTK (87 aa)). The span at 627-636 (LTPCSTPTHM) shows a compositional bias: polar residues. Residues 627 to 673 (LTPCSTPTHMSRSSSPSFNTNSGGTPAGGGQEEGGSSSLGRKAPGPK) form a disordered region. Residues 637–650 (SRSSSPSFNTNSGG) are compositionally biased toward low complexity. The PDZ 4 domain maps to 679 to 764 (EVTLNKEPRV…GPVRLVIGRH (86 aa)). Positions 783–794 (YQESREANSSPG) are enriched in polar residues. Disordered stretches follow at residues 783–803 (YQESREANSSPGLGTPLKSPS) and 834–853 (AGSEDEDHPGSGYETSEDGS). 2 positions are modified to phosphoserine: serine 891 and serine 895. Disordered regions lie at residues 915-966 (NGGS…KQEE), 990-1425 (HSIL…PSVL), 1456-1531 (ISLS…CPGT), 1725-1909 (DSQG…LPEQ), 1924-1967 (DTSC…IRQS), 2015-2070 (ERVP…ASQV), 2146-2174 (FSSHFGREGPSPHSPSHSPQDPQVPAMGG), 2262-2397 (DRPT…ERRT), 2424-2450 (QLEITPRRSKGSQATSPAGSPARGHAD), and 2465-2496 (TRAYTKGNSPPASEPAIATGSREEGESVWATP). Over residues 918–927 (SDDEDFDGEG) the composition is skewed to acidic residues. Basic and acidic residues predominate over residues 1021 to 1038 (GRKEMSGSRSSPKLEYRV). Polar residues-rich tracts occupy residues 1040–1061 (TDTQSPRSPENHTSPPQKSENL), 1126–1137 (PGDSSVPTNCGP), and 1189–1220 (SETPTVAEQVHQPESLSQPVSPRTSEPESQGI). Composition is skewed to low complexity over residues 1379–1393 (SQPPGGAGSSSSHHA) and 1456–1471 (ISLSGPGGSSEPSPSS). Serine 1767 carries the post-translational modification Phosphoserine. Basic residues predominate over residues 1797-1806 (CSPKLKRLNS). The segment covering 1884-1901 (LRTSASDTSIRTFTSPLT) has biased composition (polar residues). Low complexity-rich tracts occupy residues 1924-1937 (DTSCPTTSRSPRSG) and 1947-1963 (SGSASPPASRASLALAG). Low complexity-rich tracts occupy residues 2280 to 2296 (PPINRRSSGSIPSGSPS) and 2305 to 2321 (RSLSSCSESQSEASSLL). Composition is skewed to polar residues over residues 2322–2347 (PQMTKSPSSMTLTVSRQNPPDTSNKG) and 2362–2372 (PTSTVSPASPS). A PDZ 5 domain is found at 2550-2634 (FIVLNKKEGS…HKHALMIIKK (85 aa)). Residues 2635-2667 (GNDQPGPSFKQEPPSANGKGPFPRRTLPLEPGA) are disordered. The PDZ 6 domain maps to 2678 to 2763 (CVEVLKTSAG…GPVQLVIRKH (86 aa)).

Interacts with SCN10A, CTNND2 and PKP4. Post-translationally, a secreted form is produced by caspase-mediated proteolytic cleavage. Expressed in the heart, liver, brain, spleen, lung, kidney, testis and skeletal muscle.

Its subcellular location is the nucleus. The protein localises to the cytoplasm. The protein resides in the endoplasmic reticulum. It localises to the cell junction. It is found in the secreted. The sequence is that of PDZ domain-containing protein 2 (Pdzd2) from Rattus norvegicus (Rat).